A 243-amino-acid chain; its full sequence is 7-cyano-7-deazaguanine synthase (243 aa).

14 to 24 (FSGGQDSATCL) lines the ATP pocket. Residues C202, C217, C220, and C223 each coordinate Zn(2+).

Belongs to the QueC family. Requires Zn(2+) as cofactor.

The enzyme catalyses 7-carboxy-7-deazaguanine + NH4(+) + ATP = 7-cyano-7-deazaguanine + ADP + phosphate + H2O + H(+). It participates in purine metabolism; 7-cyano-7-deazaguanine biosynthesis. Functionally, catalyzes the ATP-dependent conversion of 7-carboxy-7-deazaguanine (CDG) to 7-cyano-7-deazaguanine (preQ(0)). This chain is 7-cyano-7-deazaguanine synthase, found in Paraburkholderia phymatum (strain DSM 17167 / CIP 108236 / LMG 21445 / STM815) (Burkholderia phymatum).